The sequence spans 480 residues: Speriolin (480 aa).

A necessary for targeting to centrosomes region spans residues 1-76 (MSLLTSYEGL…HQGVFLPPAS (76 aa)). Residues 2 to 45 (SLLTSYEGLRHQIERLVRENEELKKLVRLIRENQELKSAIKTQA) adopt a coiled-coil conformation. 2 disordered regions span residues 252–297 (INNI…SRVM) and 305–324 (VEME…DNPR).

This sequence belongs to the speriolin family. As to quaternary structure, found in a complex with CDC20, CDC27 and TUBG1. Interacts with CDC20. In terms of tissue distribution, expressed in testis. Expressed in pachyten spermatocytes, spermatids and epididymal sperm (at protein level).

It localises to the cytoplasm. The protein localises to the cytoskeleton. The protein resides in the microtubule organizing center. Its subcellular location is the centrosome. The protein is Speriolin (Spatc1) of Mus musculus (Mouse).